Here is a 237-residue protein sequence, read N- to C-terminus: MQTIALAVIGGTGVYTLSQLDDVQVYEVETLYGRPSGPIRVGMLFGQRVAFFARHGEEHALPPHKINYRANIAALQQLGVSRVLALNTVGGINEAFGPRTLVCPDQLIDYTWGRVSTFCEEVGSEVLHVDFGHPYSPLLRGCLLRAARDVDVSLVEYGCYGVTQGPRLETIAEIARLRRDGCDLVGMTGMPEAALAREKGLEYACLGIVSNWAAGCGDGAEITMGEILSNVATVFRN.

Phosphate-binding positions include threonine 12 and 54–55; that span reads RH. Residue methionine 187 coordinates substrate. Threonine 188 is a phosphate binding site. 211-213 serves as a coordination point for substrate; sequence NWA.

The protein belongs to the PNP/MTAP phosphorylase family. MTAP subfamily. As to quaternary structure, homotrimer.

It catalyses the reaction S-methyl-5'-thioinosine + phosphate = 5-(methylsulfanyl)-alpha-D-ribose 1-phosphate + hypoxanthine. Its pathway is purine metabolism; purine nucleoside salvage. Catalyzes the reversible phosphorylation of S-methyl-5'-thioinosine (MTI) to hypoxanthine and 5-methylthioribose-1-phosphate. Involved in the breakdown of S-methyl-5'-thioadenosine (MTA), a major by-product of polyamine biosynthesis. Catabolism of (MTA) occurs via deamination to MTI and phosphorolysis to hypoxanthine. This chain is Probable S-methyl-5'-thioinosine phosphorylase, found in Xylella fastidiosa (strain 9a5c).